A 223-amino-acid polypeptide reads, in one-letter code: Small ribosomal subunit protein uS3 (223 aa).

A KH type-2 domain is found at V39 to R107.

This sequence belongs to the universal ribosomal protein uS3 family. Part of the 30S ribosomal subunit. Forms a tight complex with proteins S10 and S14.

Binds the lower part of the 30S subunit head. Binds mRNA in the 70S ribosome, positioning it for translation. In Methylococcus capsulatus (strain ATCC 33009 / NCIMB 11132 / Bath), this protein is Small ribosomal subunit protein uS3.